The chain runs to 136 residues: Nucleoside diphosphate kinase (136 aa).

ATP-binding residues include Lys10, Phe58, Arg86, Thr92, Arg104, and Asn114. The active-site Pros-phosphohistidine intermediate is His117.

It belongs to the NDK family. In terms of assembly, homotetramer. Requires Mg(2+) as cofactor.

The protein localises to the cytoplasm. It carries out the reaction a 2'-deoxyribonucleoside 5'-diphosphate + ATP = a 2'-deoxyribonucleoside 5'-triphosphate + ADP. The enzyme catalyses a ribonucleoside 5'-diphosphate + ATP = a ribonucleoside 5'-triphosphate + ADP. In terms of biological role, major role in the synthesis of nucleoside triphosphates other than ATP. The ATP gamma phosphate is transferred to the NDP beta phosphate via a ping-pong mechanism, using a phosphorylated active-site intermediate. In Corynebacterium diphtheriae (strain ATCC 700971 / NCTC 13129 / Biotype gravis), this protein is Nucleoside diphosphate kinase.